We begin with the raw amino-acid sequence, 566 residues long: Membrane protein insertase YidC (566 aa).

The chain crosses the membrane as a helical span at residues 6 to 26 (NLLLLALLFVSFLLYTAWVEE). Residues 30–80 (QVAPQVQTEQVDSSVPASVASSANSANLSDGVPNSPQQSSTDATSTELPAS) are disordered. The span at 31 to 41 (VAPQVQTEQVD) shows a compositional bias: polar residues. Residues 42–58 (SSVPASVASSANSANLS) show a composition bias toward low complexity. The segment covering 61 to 80 (VPNSPQQSSTDATSTELPAS) has biased composition (polar residues). The next 4 helical transmembrane spans lie at 356–376 (LLLFFQGIVGNWGVAIILITF), 433–453 (LGGCFPILLQMPIFIALYWSL), 471–491 (LSVQDPYYILPILMGVSMFFI), and 510–530 (FMPVIFTFFFLWFPAGLVLYW).

It belongs to the OXA1/ALB3/YidC family. Type 1 subfamily. As to quaternary structure, interacts with the Sec translocase complex via SecD. Specifically interacts with transmembrane segments of nascent integral membrane proteins during membrane integration.

It is found in the cell inner membrane. In terms of biological role, required for the insertion and/or proper folding and/or complex formation of integral membrane proteins into the membrane. Involved in integration of membrane proteins that insert both dependently and independently of the Sec translocase complex, as well as at least some lipoproteins. Aids folding of multispanning membrane proteins. This Psychromonas ingrahamii (strain DSM 17664 / CCUG 51855 / 37) protein is Membrane protein insertase YidC.